The following is a 57-amino-acid chain: Large ribosomal subunit protein bL32 (57 aa).

The span at 1–19 (MATPKRRMSRANTRSRRSQ) shows a compositional bias: basic residues. The disordered stretch occupies residues 1–21 (MATPKRRMSRANTRSRRSQWK).

This sequence belongs to the bacterial ribosomal protein bL32 family.

The sequence is that of Large ribosomal subunit protein bL32 from Mycobacterium ulcerans (strain Agy99).